The primary structure comprises 158 residues: MAQPQNDQAQPPPATLTNPRFTLELEFVSSLANPYYLSHLAVNYPSLLGISKSGNENEVNDDNSDPDAEAFAAYLAYLYSYWKTPEYSQFLTHPGATLRALRLLQEEKFRRDIIRPQVIERLAGVDLNGEQSAAEAGEQNTEQNKGDRGNVENQHGKT.

Residues 130–158 (EQSAAEAGEQNTEQNKGDRGNVENQHGKT) form a disordered region.

It belongs to the Mediator complex subunit 31 family. In terms of assembly, component of the Mediator complex.

It localises to the nucleus. Functionally, component of the Mediator complex, a coactivator involved in the regulated transcription of nearly all RNA polymerase II-dependent genes. Mediator functions as a bridge to convey information from gene-specific regulatory proteins to the basal RNA polymerase II transcription machinery. Mediator is recruited to promoters by direct interactions with regulatory proteins and serves as a scaffold for the assembly of a functional preinitiation complex with RNA polymerase II and the general transcription factors. In Emericella nidulans (strain FGSC A4 / ATCC 38163 / CBS 112.46 / NRRL 194 / M139) (Aspergillus nidulans), this protein is Mediator of RNA polymerase II transcription subunit 31 (soh1).